A 777-amino-acid chain; its full sequence is Intraflagellar transport protein 80 homolog (777 aa).

WD repeat units lie at residues 12-50, 104-143, 145-185, 186-225, 227-265, 267-306, and 504-542; these read KHQE…TSLI, AHCG…RSTL, QQGT…LQWK, AHDG…LYGS, PHEH…YALE, PNTG…WEWK, and KLGT…YVDR.

Component of the IFT complex B, at least composed of IFT20, IFT22, IFT25, IFT27, IFT46, IFT52, TRAF3IP1/IFT54, IFT57, IFT74, IFT80, IFT81, and IFT88. Interacts with IFT88. Interacts with IFT57 and IFT70B.

It is found in the cytoplasm. The protein localises to the cytoskeleton. Its subcellular location is the cilium basal body. The protein resides in the cilium axoneme. Functionally, component of the intraflagellar transport (IFT) complex B, which is essential for the development and maintenance of motile and sensory cilia. The polypeptide is Intraflagellar transport protein 80 homolog (Ift80) (Mus musculus (Mouse)).